The primary structure comprises 406 residues: Phosphopentomutase (406 aa).

Mn(2+)-binding residues include D10, D305, H310, D346, H347, and H358.

The protein belongs to the phosphopentomutase family. It depends on Mn(2+) as a cofactor.

Its subcellular location is the cytoplasm. It carries out the reaction 2-deoxy-alpha-D-ribose 1-phosphate = 2-deoxy-D-ribose 5-phosphate. The catalysed reaction is alpha-D-ribose 1-phosphate = D-ribose 5-phosphate. It functions in the pathway carbohydrate degradation; 2-deoxy-D-ribose 1-phosphate degradation; D-glyceraldehyde 3-phosphate and acetaldehyde from 2-deoxy-alpha-D-ribose 1-phosphate: step 1/2. Isomerase that catalyzes the conversion of deoxy-ribose 1-phosphate (dRib-1-P) and ribose 1-phosphate (Rib-1-P) to deoxy-ribose 5-phosphate (dRib-5-P) and ribose 5-phosphate (Rib-5-P), respectively. The chain is Phosphopentomutase from Vibrio campbellii (strain ATCC BAA-1116).